The following is a 236-amino-acid chain: MARRYWDINLEEMMGAGVHFGHGTRKWNPRMAPYISGKRKGIHITNLTRTARPLSEACDLVFDAASRGKHFLIVGTKDKAADSVASAAIRARCHYVNKKWLGGMSTNWSTTETRLHKFRDLRAEQKMGRFKRLPKRDAAMLKRQLSHLQTYLGGIKYMTGLPDIVIIVDHQEEYTAIRECLTLGIPTICLIDTNCDPDLADIPIPANDDAIASIQLILNKLVLAIREGHYSYLGSH.

It belongs to the universal ribosomal protein uS2 family.

It is found in the plastid. The protein localises to the chloroplast. The protein is Small ribosomal subunit protein uS2c (rps2) of Amborella trichopoda.